We begin with the raw amino-acid sequence, 104 residues long: MMNNEHDNFQKEVETTTETTFNREEGKRMVRPLFKRSKKYCRFCAIGQLRIDLIDDLEALKRFLSPYAKINPRRITGNCQMHQRHVAKALKRARYLALVPFVKD.

The segment covering 1–14 has biased composition (basic and acidic residues); sequence MMNNEHDNFQKEVE. Residues 1–25 form a disordered region; sequence MMNNEHDNFQKEVETTTETTFNREE.

Belongs to the bacterial ribosomal protein bS18 family. Part of the 30S ribosomal subunit. Forms a tight heterodimer with protein bS6.

Its function is as follows. Binds as a heterodimer with protein bS6 to the central domain of the 16S rRNA, where it helps stabilize the platform of the 30S subunit. The polypeptide is Small ribosomal subunit protein bS18 (Mycoplasma pneumoniae (strain ATCC 29342 / M129 / Subtype 1) (Mycoplasmoides pneumoniae)).